We begin with the raw amino-acid sequence, 382 residues long: Protein farnesyltransferase subunit beta (382 aa).

PFTB repeat units follow at residues 78–119 (CERA…CLCD), 129–170 (RDRL…SLVG), 178–219 (FEGT…ALLG), 226–268 (EIKL…VIVA), and 286–328 (PEKL…SSIA). (2E,6E)-farnesyl diphosphate contacts are provided by residues 204–207 (HGGY) and 247–250 (RSNK). Zn(2+) is bound by residues aspartate 253 and cysteine 255. A (2E,6E)-farnesyl diphosphate-binding site is contributed by 256–259 (YSWW). Histidine 316 is a binding site for Zn(2+).

The protein belongs to the protein prenyltransferase subunit beta family. In terms of assembly, heterodimer of an alpha(cwp1) and a beta(cpp1) subunit. Requires Zn(2+) as cofactor.

The enzyme catalyses L-cysteinyl-[protein] + (2E,6E)-farnesyl diphosphate = S-(2E,6E)-farnesyl-L-cysteinyl-[protein] + diphosphate. Its function is as follows. Catalyzes the transfer of a farnesyl moiety from farnesyl diphosphate to a cysteine at the fourth position from the C-terminus of several proteins. The beta(cpp1) subunit is responsible for peptide-binding. The polypeptide is Protein farnesyltransferase subunit beta (cpp1) (Schizosaccharomyces pombe (strain 972 / ATCC 24843) (Fission yeast)).